Consider the following 372-residue polypeptide: uncharacterized protein (372 aa).

The PNPLA domain maps to 38 to 270 (FFIEGGGTKG…ANNIPLDYLI (233 aa)). Positions 42 to 47 (GGGTKG) match the GXGXXG motif. A GXSXG motif is present at residues 74-78 (GTSVG). Ser76 acts as the Nucleophile in catalysis. Asp257 acts as the Proton acceptor in catalysis. Positions 257–259 (DGG) match the DGA/G motif.

Its function is as follows. Probable lipid hydrolase. This is an uncharacterized protein from Acanthamoeba polyphaga (Amoeba).